A 329-amino-acid polypeptide reads, in one-letter code: MSFLFNKRPKSTQDVVRCLCDNLPKLEINNDKKKSFEEVSKCLQNLRVSLCGTAEVEPDADLVSDLSFQIYQSNLPFLLVRYLPKLEFESKKDTGLIFSALLRRHVASRYPTVDYMLAHPQIFPVLVSYYRYQEVAFTAGSILRECSRHEALNEVLLNSRDFWTFFSLIQASSFDMASDAFSTFKSILLNHKSQVAEFISYHFDEFFKQYTVLLKSENYVTKRQSLKLLGEILLNRANRSVMTRYISSAENLKLMMILLRDKSKNIQFEAFHVFKLFVANPEKSEEVIEILRRNKSKLISYLSAFHTDRKNDEQFNDERAFVIKQIERL.

This sequence belongs to the Mo25 family.

The sequence is that of Mo25-like protein (pmo25) from Schizosaccharomyces pombe (strain 972 / ATCC 24843) (Fission yeast).